The sequence spans 185 residues: Elongation factor P (185 aa).

This sequence belongs to the elongation factor P family.

The protein localises to the cytoplasm. It functions in the pathway protein biosynthesis; polypeptide chain elongation. Its function is as follows. Involved in peptide bond synthesis. Stimulates efficient translation and peptide-bond synthesis on native or reconstituted 70S ribosomes in vitro. Probably functions indirectly by altering the affinity of the ribosome for aminoacyl-tRNA, thus increasing their reactivity as acceptors for peptidyl transferase. This Geobacillus kaustophilus (strain HTA426) protein is Elongation factor P.